The sequence spans 800 residues: Putative antiporter subunit mnhA2 (800 aa).

21 consecutive transmembrane segments (helical) span residues methionine 1 to leucine 21, valine 29 to isoleucine 49, glycine 78 to alanine 98, leucine 109 to alanine 129, isoleucine 133 to tryptophan 153, phenylalanine 167 to isoleucine 187, phenylalanine 209 to phenylalanine 229, threonine 241 to phenylalanine 261, valine 272 to alanine 292, glycine 300 to glycine 320, isoleucine 336 to leucine 356, isoleucine 387 to serine 407, tyrosine 424 to phenylalanine 444, proline 472 to valine 492, valine 528 to valine 548, isoleucine 595 to phenylalanine 615, glycine 627 to isoleucine 647, leucine 651 to methionine 671, leucine 676 to serine 696, threonine 712 to alanine 732, and leucine 768 to leucine 788.

The protein belongs to the CPA3 antiporters (TC 2.A.63) subunit A family. As to quaternary structure, may form a heterooligomeric complex that consists of seven subunits: mnhA2, mnhB2, mnhC2, mnhD2, mnhE2, mnhF2 and mnhG2.

The protein localises to the cell membrane. In Staphylococcus epidermidis (strain ATCC 12228 / FDA PCI 1200), this protein is Putative antiporter subunit mnhA2 (mnhA2).